The following is a 101-amino-acid chain: Small ribosomal subunit protein uS14 (101 aa).

This sequence belongs to the universal ribosomal protein uS14 family. Part of the 30S ribosomal subunit. Contacts proteins S3 and S10.

Its function is as follows. Binds 16S rRNA, required for the assembly of 30S particles and may also be responsible for determining the conformation of the 16S rRNA at the A site. The sequence is that of Small ribosomal subunit protein uS14 from Pseudomonas putida (strain GB-1).